Reading from the N-terminus, the 291-residue chain is Probable S-adenosylmethionine-dependent methyltransferase CRG1 (291 aa).

It belongs to the methyltransferase superfamily.

It is found in the cytoplasm. In terms of biological role, probable S-adenosylmethionine-dependent methyltransferase which mediates cantharidin resistance. The chain is Probable S-adenosylmethionine-dependent methyltransferase CRG1 (CRG1) from Saccharomyces cerevisiae (strain ATCC 204508 / S288c) (Baker's yeast).